A 372-amino-acid polypeptide reads, in one-letter code: Queuine tRNA-ribosyltransferase (372 aa).

D89 acts as the Proton acceptor in catalysis. Residues 89–93, D143, Q185, and G212 contribute to the substrate site; that span reads DSGGF. The interval 243-249 is RNA binding; sequence GVGKPED. The active-site Nucleophile is the D262. The RNA binding; important for wobble base 34 recognition stretch occupies residues 267–271; the sequence is TRNAR. Residues C300, C302, C305, and H331 each contribute to the Zn(2+) site.

The protein belongs to the queuine tRNA-ribosyltransferase family. As to quaternary structure, homodimer. Within each dimer, one monomer is responsible for RNA recognition and catalysis, while the other monomer binds to the replacement base PreQ1. It depends on Zn(2+) as a cofactor.

The catalysed reaction is 7-aminomethyl-7-carbaguanine + guanosine(34) in tRNA = 7-aminomethyl-7-carbaguanosine(34) in tRNA + guanine. Its pathway is tRNA modification; tRNA-queuosine biosynthesis. In terms of biological role, catalyzes the base-exchange of a guanine (G) residue with the queuine precursor 7-aminomethyl-7-deazaguanine (PreQ1) at position 34 (anticodon wobble position) in tRNAs with GU(N) anticodons (tRNA-Asp, -Asn, -His and -Tyr). Catalysis occurs through a double-displacement mechanism. The nucleophile active site attacks the C1' of nucleotide 34 to detach the guanine base from the RNA, forming a covalent enzyme-RNA intermediate. The proton acceptor active site deprotonates the incoming PreQ1, allowing a nucleophilic attack on the C1' of the ribose to form the product. After dissociation, two additional enzymatic reactions on the tRNA convert PreQ1 to queuine (Q), resulting in the hypermodified nucleoside queuosine (7-(((4,5-cis-dihydroxy-2-cyclopenten-1-yl)amino)methyl)-7-deazaguanosine). The polypeptide is Queuine tRNA-ribosyltransferase (Pseudomonas aeruginosa (strain LESB58)).